A 326-amino-acid chain; its full sequence is Olfactory receptor 11H2 (326 aa).

The Extracellular segment spans residues 1-44; sequence MCPLTLHVTGLMNVSEPNSSFAFVNEFILQGFSCEWTIQIFLFS. N-linked (GlcNAc...) asparagine glycosylation is found at Asn-13 and Asn-18. A helical membrane pass occupies residues 45 to 65; sequence LFTTIYALTITGNGAIAFVLW. Over 66-72 the chain is Cytoplasmic; it reads CDRRLHT. The helical transmembrane segment at 73–93 threads the bilayer; that stretch reads PMYMFLGNFSFLEIWYVSSTV. Over 94 to 112 the chain is Extracellular; it reads PKMLVNFLSEKKNISFAGC. The N-linked (GlcNAc...) asparagine glycan is linked to Asn-106. Cysteines 112 and 194 form a disulfide. Residues 113–133 form a helical membrane-spanning segment; that stretch reads FLQFYFFFSLGTSECLLLTVM. At 134–158 the chain is on the cytoplasmic side; the sequence is AFDQYLAICRPLLYPNIMTGHLYAK. Residues 159–179 form a helical membrane-spanning segment; the sequence is LVILCWVCGFLWFLIPIVLIS. The Extracellular portion of the chain corresponds to 180–216; that stretch reads QKPFCGPNIIDHVVCDPGPLFALDCVSAPRIQLFCYT. A helical membrane pass occupies residues 217-237; the sequence is LSSLVIFGNFLFIIGSYTLVL. Over 238–259 the chain is Cytoplasmic; sequence KAVLGMPSSTGRHKAFSTCGSH. Residues 260–280 traverse the membrane as a helical segment; it reads LAVVSLCYSPLMVMYVSPGLG. Over 281-287 the chain is Extracellular; sequence HSTGMQK. Residues 288 to 308 form a helical membrane-spanning segment; that stretch reads IETLFYAMVTPLFNPLIYSLQ. The Cytoplasmic segment spans residues 309 to 326; the sequence is NKEIKAALRKVLGSSNII.

The protein belongs to the G-protein coupled receptor 1 family.

The protein localises to the cell membrane. Its function is as follows. Odorant receptor. The sequence is that of Olfactory receptor 11H2 (OR11H2) from Homo sapiens (Human).